We begin with the raw amino-acid sequence, 245 residues long: Carbohydrate deacetylase (245 aa).

Positions 61 and 122 each coordinate Mg(2+).

The protein belongs to the YdjC deacetylase family. Mg(2+) is required as a cofactor.

In terms of biological role, probably catalyzes the deacetylation of acetylated carbohydrates an important step in the degradation of oligosaccharides. The sequence is that of Carbohydrate deacetylase (celC) from Geobacillus stearothermophilus (Bacillus stearothermophilus).